The following is a 274-amino-acid chain: Prolyl 4-hydroxylase 13 (274 aa).

Residues 1–10 (MRSYGKEKKL) are Cytoplasmic-facing. The chain crosses the membrane as a helical; Signal-anchor for type II membrane protein span at residues 11-31 (VFPYVFIACCFFLAIFGFCFF). Over 32 to 274 (NLFSQGISFS…TKWIRDQTYD (243 aa)) the chain is Lumenal. Positions 151–270 (YYESFNILRY…KWVATKWIRD (120 aa)) constitute a Fe2OG dioxygenase domain. Fe cation contacts are provided by H169 and D171. Residue N242 is glycosylated (N-linked (GlcNAc...) asparagine). H251 serves as a coordination point for Fe cation. K261 lines the 2-oxoglutarate pocket.

This sequence belongs to the P4HA family. It depends on Fe(2+) as a cofactor. L-ascorbate serves as cofactor. In terms of tissue distribution, expressed in epidermal root hair cells (trichoblasts) root hairless cells (atrichoblasts).

The protein resides in the endoplasmic reticulum membrane. The enzyme catalyses L-prolyl-[collagen] + 2-oxoglutarate + O2 = trans-4-hydroxy-L-prolyl-[collagen] + succinate + CO2. Functionally, catalyzes the post-translational formation of 4-hydroxyproline in -Xaa-Pro-Gly- sequences in proline-rich peptide sequences of plant glycoproteins and other proteins. Hydroxyprolines are important constituent of many plant cell wall glycoproteins such as extensins, hydroxyproline-rich glycoproteins, lectins and arabinogalactan proteins. Possesses high affinity for leucine-rich repeat and proline-rich extensins of root cell walls that are essential for root hair development. Hydroxyprolines define the subsequent O-glycosylation sites by arabinosyltransferases which elongate the O-arabinosides on extensins. The polypeptide is Prolyl 4-hydroxylase 13 (Arabidopsis thaliana (Mouse-ear cress)).